A 1183-amino-acid chain; its full sequence is Formin-like protein (1183 aa).

Disordered stretches follow at residues 1–44 (MGAV…SISS) and 63–82 (QHVR…PTTD). Residues 23 to 36 (PHSHAHHHSMRNGH) are compositionally biased toward basic residues. The span at 63 to 79 (QHVRQPSLRSRSQQPMP) shows a compositional bias: polar residues. The region spanning 76-559 (QPMPTTDELD…HNEQELKKRD (484 aa)) is the GBD/FH3 domain. A Phosphoserine modification is found at serine 225. Positions 572–584 (LSRSLPRSASSGD) are enriched in polar residues. The segment at 572 to 681 (LSRSLPRSAS…PPVAGFMPAP (110 aa)) is disordered. Pro residues-rich tracts occupy residues 605–614 (LPPPPPPMPA) and 622–640 (APPP…PPGF). A compositionally biased stretch (low complexity) spans 641–654 (SPLGSPSGSLASTA). The region spanning 687-1088 (IKRKVPTKYK…AALAASKKEN (402 aa)) is the FH2 domain. The DAD domain occupies 1136 to 1169 (DEVYNGALEDILLGLKSEPYRRADAVRRSQRRRI).

It belongs to the formin homology family. Self-associates. Interacts (via GBD/FH3 domain) with Cdc42; the interaction is stronger with the GTP bound form of Cdc42.

Together with Cdc42, involved in establishment of planar cell polarity in the developing compound eye by contributing to ommatidial rotation. Together with DAAM and Cdc42, has a role in neuronal development of mushroom bodies. The sequence is that of Formin-like protein from Drosophila melanogaster (Fruit fly).